The following is a 419-amino-acid chain: Putative competence-damage inducible protein (419 aa).

The protein belongs to the CinA family.

The sequence is that of Putative competence-damage inducible protein from Streptococcus agalactiae serotype III (strain NEM316).